The sequence spans 165 residues: Methylated-DNA--protein-cysteine methyltransferase (165 aa).

The active-site Nucleophile; methyl group acceptor is Cys-126.

The protein belongs to the MGMT family.

The protein resides in the cytoplasm. The enzyme catalyses a 6-O-methyl-2'-deoxyguanosine in DNA + L-cysteinyl-[protein] = S-methyl-L-cysteinyl-[protein] + a 2'-deoxyguanosine in DNA. It catalyses the reaction a 4-O-methyl-thymidine in DNA + L-cysteinyl-[protein] = a thymidine in DNA + S-methyl-L-cysteinyl-[protein]. In terms of biological role, involved in the cellular defense against the biological effects of O6-methylguanine (O6-MeG) and O4-methylthymine (O4-MeT) in DNA. Repairs the methylated nucleobase in DNA by stoichiometrically transferring the methyl group to a cysteine residue in the enzyme. This is a suicide reaction: the enzyme is irreversibly inactivated. This Mycobacterium leprae (strain TN) protein is Methylated-DNA--protein-cysteine methyltransferase.